Consider the following 314-residue polypeptide: DNA topoisomerase I (314 aa).

The Topo IB-type catalytic domain occupies 77–314 (IQNRNAKRDR…VDHVKSSTDG (238 aa)). Catalysis depends on tyrosine 274, which acts as the O-(3'-phospho-DNA)-tyrosine intermediate.

It belongs to the type IB topoisomerase family.

The protein localises to the virion. The enzyme catalyses ATP-independent breakage of single-stranded DNA, followed by passage and rejoining.. Functionally, releases the supercoiling and torsional tension of DNA introduced during the DNA replication and transcription by transiently cleaving and rejoining one strand of the DNA duplex. Introduces a single-strand break via transesterification at the specific target site 5'-[CT]CCTTp site in duplex DNA. The scissile phosphodiester is attacked by the catalytic tyrosine of the enzyme, resulting in the formation of a DNA-(3'-phosphotyrosyl)-enzyme intermediate and the expulsion of a 5'-OH DNA strand. The free DNA strand then undergoes passage around the unbroken strand thus removing DNA supercoils. Finally, in the religation step, the DNA 5'-OH attacks the covalent intermediate to expel the active-site tyrosine and restore the DNA phosphodiester backbone. This Cynomys gunnisoni (Gunnison's prairie dog) protein is DNA topoisomerase I (OPG111).